Consider the following 153-residue polypeptide: Glucose-6-phosphate 1-dehydrogenase (153 aa).

NADP(+)-binding residues include Arg-21 and Lys-120. Lys-120 serves as a coordination point for D-glucose 6-phosphate.

This sequence belongs to the glucose-6-phosphate dehydrogenase family.

It is found in the cytoplasm. It localises to the cytosol. The catalysed reaction is D-glucose 6-phosphate + NADP(+) = 6-phospho-D-glucono-1,5-lactone + NADPH + H(+). Its pathway is carbohydrate degradation; pentose phosphate pathway; D-ribulose 5-phosphate from D-glucose 6-phosphate (oxidative stage): step 1/3. In terms of biological role, cytosolic glucose-6-phosphate dehydrogenase that catalyzes the first and rate-limiting step of the oxidative branch within the pentose phosphate pathway/shunt, an alternative route to glycolysis for the dissimilation of carbohydrates and a major source of reducing power and metabolic intermediates for fatty acid and nucleic acid biosynthetic processes. This is Glucose-6-phosphate 1-dehydrogenase (ZW) from Culex pipiens (House mosquito).